Reading from the N-terminus, the 245-residue chain is MYTRYSYNPTLGRTYVYDNKYYKNLGHVIKNAKRKKNAAEHELEERNLDPLDKYLVAEDPFLGPGKNQKLTLFKEIRNVKPDTMKLIVNWSGKEFLRETWTRFMEDSFPIVNDQEIMDVFLVVNMRPTKPNRCSVLAQHALRCDSDYVPHEVIRIVKPSYVGSNNEYRISLGKRYNGCPVMNLHSEYTNSFEDFINRVIWENFYKPLVYIGTDSAEEEEILLEVSLVFKIKEFAPDAPLYTGPAY.

The protein belongs to the polyhedrin family.

In terms of biological role, major component of the virus occlusion bodies, which are large proteinaceous structures (polyhedra), that protect the virus from the outside environment for extended periods until they are ingested by insect larvae. The chain is Polyhedrin from Lepidoptera (butterflies and moths).